Reading from the N-terminus, the 578-residue chain is MPFRLLIPLGLLCALLPQHHGAPGPDGSAPDPAHYRERVKAMFYHAYDSYLENAFPFDELRPLTCDGHDTWGSFSLTLIDALDTLLILGNVSEFQRVVEVLQDSVDFDIDVNASVFETNIRVVGGLLSAHLLSKKAGVEVEAGWPCSGPLLRMAEEAARKLLPAFQTPTGMPYGTVNLLHGVNPGETPVTCTAGIGTFIVEFATLSSLTGDPVFEDVARVALMRLWESRSDIGLVGNHIDVLTGKWVAQDAGIGAGVDSYFEYLVKGAILLQDKKLMAMFLEYNKAIRNYTRFDDWYLWVQMYKGTVSMPVFQSLEAYWPGLQSLIGDIDNAMRTFLNYYTVWKQFGGLPEFYNIPQGYTVEKREGYPLRPELIESAMYLYRATGDPTLLELGRDAVESIEKISKVECGFATIKDLRDHKLDNRMESFFLAETVKYLYLLFDPTNFIHNNGSTFDAVITPYGECILGAGGYIFNTEAHPIDPAALHCCQRLKEEQWEVEDLMREFYSLKRSRSKFQKNTVSSGPWEPPARPGTLFSPENHDQARERKPAKQKVPLLSCPSQPFTSKLALLGQVFLDSS.

The N-terminal stretch at 1–21 (MPFRLLIPLGLLCALLPQHHG) is a signal peptide. N-linked (GlcNAc...) asparagine glycosylation is found at asparagine 90, asparagine 112, asparagine 289, and asparagine 450. The disordered stretch occupies residues 517–557 (KNTVSSGPWEPPARPGTLFSPENHDQARERKPAKQKVPLLS). Residues 538–548 (ENHDQARERKP) show a composition bias toward basic and acidic residues.

This sequence belongs to the glycosyl hydrolase 47 family. Post-translationally, N-glycosylated. In terms of tissue distribution, expressed ubiquitously in all tissues tested with slightly higher levels detected in small intestine and peripheral blood leukocytes and weakest levels in brain and skeletal muscle.

It localises to the endoplasmic reticulum lumen. In terms of biological role, involved in the endoplasmic reticulum-associated degradation (ERAD) pathway that targets misfolded glycoproteins for degradation in an N-glycan-dependent manner. May initiate ERAD by promoting the first mannose trimming step of ERAD substrates, from Man9GlcNAc2 to Man8GlcNAc2. Seems to recognize and bind to exposed hydrophobic regions in target proteins. This chain is ER degradation-enhancing alpha-mannosidase-like protein 2 (EDEM2), found in Homo sapiens (Human).